The sequence spans 822 residues: Putative ESX-1 scaffolding and assembly protein SaeB (822 aa).

Functionally, may be involved in assembly of the ESX-1 / type VII specialized secretion system (T7SS), which exports several proteins including EsxA and EsxB. Involved in DNA conjugation in recipient (MDK8) but not donor (mc(2)155) strain. In Mycolicibacterium smegmatis (strain ATCC 700084 / mc(2)155) (Mycobacterium smegmatis), this protein is Putative ESX-1 scaffolding and assembly protein SaeB.